The primary structure comprises 402 residues: Lipid-A-disaccharide synthase (402 aa).

The protein belongs to the LpxB family.

It carries out the reaction a lipid X + a UDP-2-N,3-O-bis[(3R)-3-hydroxyacyl]-alpha-D-glucosamine = a lipid A disaccharide + UDP + H(+). Its pathway is bacterial outer membrane biogenesis; LPS lipid A biosynthesis. Condensation of UDP-2,3-diacylglucosamine and 2,3-diacylglucosamine-1-phosphate to form lipid A disaccharide, a precursor of lipid A, a phosphorylated glycolipid that anchors the lipopolysaccharide to the outer membrane of the cell. The sequence is that of Lipid-A-disaccharide synthase from Cupriavidus pinatubonensis (strain JMP 134 / LMG 1197) (Cupriavidus necator (strain JMP 134)).